The following is an 870-amino-acid chain: DNA-directed RNA polymerase subunit Rpo1N (870 aa).

8 residues coordinate Zn(2+): cysteine 60, cysteine 63, cysteine 70, histidine 73, cysteine 100, cysteine 103, cysteine 146, and cysteine 149. Mg(2+) is bound by residues aspartate 451, aspartate 453, and aspartate 455.

This sequence belongs to the RNA polymerase beta' chain family. Part of the RNA polymerase complex. Requires Mg(2+) as cofactor. Zn(2+) is required as a cofactor.

The protein resides in the cytoplasm. The catalysed reaction is RNA(n) + a ribonucleoside 5'-triphosphate = RNA(n+1) + diphosphate. In terms of biological role, DNA-dependent RNA polymerase (RNAP) catalyzes the transcription of DNA into RNA using the four ribonucleoside triphosphates as substrates. Forms the clamp head domain. The protein is DNA-directed RNA polymerase subunit Rpo1N of Methanothermobacter thermautotrophicus (strain ATCC 29096 / DSM 1053 / JCM 10044 / NBRC 100330 / Delta H) (Methanobacterium thermoautotrophicum).